Here is an 829-residue protein sequence, read N- to C-terminus: Protein roadkill (829 aa).

Low complexity-rich tracts occupy residues 24 to 36, 122 to 140, and 266 to 288; these read EQQQ…QQQQ, TPAA…QAAP, and SSSS…SSSS. Disordered regions lie at residues 24–47, 106–142, 266–296, and 313–400; these read EQQQ…CCEN, SSLQ…APSV, SSSS…SHHS, and HLNQ…NQQQ. Over residues 313–322 the composition is skewed to basic residues; sequence HLNQQQHHHP. Low complexity-rich tracts occupy residues 323–353, 372–382, and 389–400; these read LSAS…QQQH, SSSSSSSSSSS, and SSSSSNSNNQQQ. The MATH domain occupies 486 to 616; it reads KFSYMWTINN…EDKLTIFCEV (131 aa). The BTB domain maps to 655 to 722; the sequence is SDVTLSVGGR…IYTGKAPNLE (68 aa).

Belongs to the Tdpoz family. As to quaternary structure, interacts with ci and gft/CUL3. As to expression, expressed near the anterio-posterior compartment boundary of antenna, leg and wing disks.

The protein resides in the nucleus. It functions in the pathway protein modification; protein ubiquitination. Involved in segment polarity. In complex with gft/CUL3, promotes ubiquitination of ci and its subsequent degradation by the proteasome, which results in hh signaling attenuation. This regulation may be important during eye formation for proper packing of ommatidia into a hexagonal array. This Drosophila melanogaster (Fruit fly) protein is Protein roadkill (rdx).